Here is a 380-residue protein sequence, read N- to C-terminus: Cytochrome b (380 aa).

Helical transmembrane passes span 34–54 (FGSL…LLAM), 78–99 (WLIR…YLHI), 114–134 (WNTG…GYVL), and 179–199 (FFAL…IHLT). His-84 and His-98 together coordinate heme b. 2 residues coordinate heme b: His-183 and His-197. His-202 is an a ubiquinone binding site. The next 4 membrane-spanning stretches (helical) occupy residues 227-247 (SKDI…ALLS), 289-309 (LGGV…PFLH), 321-341 (LSQA…WIGS), and 348-368 (FIII…ILLP).

The protein belongs to the cytochrome b family. In terms of assembly, the cytochrome bc1 complex contains 11 subunits: 3 respiratory subunits (MT-CYB, CYC1 and UQCRFS1), 2 core proteins (UQCRC1 and UQCRC2) and 6 low-molecular weight proteins (UQCRH/QCR6, UQCRB/QCR7, UQCRQ/QCR8, UQCR10/QCR9, UQCR11/QCR10 and a cleavage product of UQCRFS1). This cytochrome bc1 complex then forms a dimer. Heme b is required as a cofactor.

Its subcellular location is the mitochondrion inner membrane. Functionally, component of the ubiquinol-cytochrome c reductase complex (complex III or cytochrome b-c1 complex) that is part of the mitochondrial respiratory chain. The b-c1 complex mediates electron transfer from ubiquinol to cytochrome c. Contributes to the generation of a proton gradient across the mitochondrial membrane that is then used for ATP synthesis. In Phalcoboenus australis (Striated caracara), this protein is Cytochrome b (MT-CYB).